The primary structure comprises 201 residues: Small ribosomal subunit protein uS4c (201 aa).

The tract at residues 20 to 43 (GLTSKRPRAGSDLRNQSRAGKKSQ) is disordered. Positions 89–150 (MRLDNILFRL…EQKSRVMIQN (62 aa)) constitute an S4 RNA-binding domain.

It belongs to the universal ribosomal protein uS4 family. As to quaternary structure, part of the 30S ribosomal subunit. Contacts protein S5. The interaction surface between S4 and S5 is involved in control of translational fidelity.

It is found in the plastid. The protein localises to the chloroplast. One of the primary rRNA binding proteins, it binds directly to 16S rRNA where it nucleates assembly of the body of the 30S subunit. Functionally, with S5 and S12 plays an important role in translational accuracy. The protein is Small ribosomal subunit protein uS4c (rps4) of Populus alba (White poplar).